A 429-amino-acid chain; its full sequence is Histidine--tRNA ligase (429 aa).

This sequence belongs to the class-II aminoacyl-tRNA synthetase family. As to quaternary structure, homodimer.

It localises to the cytoplasm. It catalyses the reaction tRNA(His) + L-histidine + ATP = L-histidyl-tRNA(His) + AMP + diphosphate + H(+). This is Histidine--tRNA ligase from Pseudomonas syringae pv. tomato (strain ATCC BAA-871 / DC3000).